Here is a 267-residue protein sequence, read N- to C-terminus: PF03932 family protein CutC (267 aa).

Belongs to the CutC family.

It localises to the cytoplasm. The polypeptide is PF03932 family protein CutC (Xylella fastidiosa (strain Temecula1 / ATCC 700964)).